A 258-amino-acid chain; its full sequence is Imidazole glycerol phosphate synthase subunit HisF (258 aa).

Catalysis depends on residues Asp11 and Asp130.

This sequence belongs to the HisA/HisF family. As to quaternary structure, heterodimer of HisH and HisF.

The protein resides in the cytoplasm. The enzyme catalyses 5-[(5-phospho-1-deoxy-D-ribulos-1-ylimino)methylamino]-1-(5-phospho-beta-D-ribosyl)imidazole-4-carboxamide + L-glutamine = D-erythro-1-(imidazol-4-yl)glycerol 3-phosphate + 5-amino-1-(5-phospho-beta-D-ribosyl)imidazole-4-carboxamide + L-glutamate + H(+). Its pathway is amino-acid biosynthesis; L-histidine biosynthesis; L-histidine from 5-phospho-alpha-D-ribose 1-diphosphate: step 5/9. Functionally, IGPS catalyzes the conversion of PRFAR and glutamine to IGP, AICAR and glutamate. The HisF subunit catalyzes the cyclization activity that produces IGP and AICAR from PRFAR using the ammonia provided by the HisH subunit. The sequence is that of Imidazole glycerol phosphate synthase subunit HisF from Shigella dysenteriae serotype 1 (strain Sd197).